Reading from the N-terminus, the 192-residue chain is Phosphoheptose isomerase (192 aa).

The region spanning 37 to 192 (LADSFKGGGK…IQLIEKEMVK (156 aa)) is the SIS domain. A substrate-binding site is contributed by 52–54 (NGG). Zn(2+)-binding residues include histidine 61 and glutamate 65. Substrate is bound by residues glutamate 65, 93–94 (ND), 119–121 (STS), serine 124, and glutamine 172. Residues glutamine 172 and histidine 180 each coordinate Zn(2+).

Belongs to the SIS family. GmhA subfamily. In terms of assembly, homotetramer. Zn(2+) is required as a cofactor.

It is found in the cytoplasm. It catalyses the reaction 2 D-sedoheptulose 7-phosphate = D-glycero-alpha-D-manno-heptose 7-phosphate + D-glycero-beta-D-manno-heptose 7-phosphate. Its pathway is carbohydrate biosynthesis; D-glycero-D-manno-heptose 7-phosphate biosynthesis; D-glycero-alpha-D-manno-heptose 7-phosphate and D-glycero-beta-D-manno-heptose 7-phosphate from sedoheptulose 7-phosphate: step 1/1. Catalyzes the isomerization of sedoheptulose 7-phosphate in D-glycero-D-manno-heptose 7-phosphate. In Escherichia coli O7:K1 (strain IAI39 / ExPEC), this protein is Phosphoheptose isomerase.